Reading from the N-terminus, the 609-residue chain is MANMIDKIDLKSQGSSNLSGEMTNHQKVGTLYKRLLLQVKHLWHFLLLAAIGSIFFSAADASMIYLINPILNYGFGPGGGITKQSATILMLMGVGMVGLLALRSVGSFVSQYFIGSLGQKVVYKFRKDIYKRLMDLPASFFDKHSTGQIISRLLYNVDQVIEATSTAIITVVQDGTFVIGLIVVMFVSSWQLSLFLIVVGPFLGLFISIINKKFRNLSRNTQSSMGNVTHTAEETIRNYKEIRIFGAQQKQQNKFFKNLDYTYSQQIRTIALDALTSPVIQIIASLVLAFSLFTIAIFGTNEGDGSSWLTAGSFASFFAAAAAILKPIKNLTKVNVVIQKAVAATEDIFYILDYPAEKETGSKELAKVDGNVTIKDLSFAFGEHKVLSGVSVDIKAGQTVAFVGKSGSGKTTLTSIISRFYTQHEGEILLDGVDTRELTLENLRSHLSIVSQNVHLFDDTVYNNIAFGLSREVSEEEVIDALKRANAYEFVQELSDGINTNIGNNGSKLSGGQRQRISIARALLKNAPVLIFDEATSALDNESERVVQQALESLTKSCTTIVIAHRLSTVENADKIVVMDGGRVVESGKHQELLEQGGLYTRLYQSGLQ.

Helical transmembrane passes span 47 to 67 (LLAA…IYLI), 88 to 108 (ILML…VGSF), 167 to 187 (AIIT…VMFV), 190 to 210 (WQLS…ISII), 279 to 299 (VIQI…AIFG), and 305 to 325 (GSSW…AAIL). An ABC transmembrane type-1 domain is found at 47-340 (LLAAIGSIFF…LTKVNVVIQK (294 aa)). The 235-residue stretch at 372-606 (VTIKDLSFAF…GGLYTRLYQS (235 aa)) folds into the ABC transporter domain. 404–411 (GKSGSGKT) serves as a coordination point for ATP.

It belongs to the ABC transporter superfamily. Lipid exporter (TC 3.A.1.106) family. As to quaternary structure, homodimer.

Its subcellular location is the cell inner membrane. The enzyme catalyses ATP + H2O + lipid A-core oligosaccharideSide 1 = ADP + phosphate + lipid A-core oligosaccharideSide 2.. Involved in lipopolysaccharide (LPS) biosynthesis. Translocates lipid A-core from the inner to the outer leaflet of the inner membrane. Transmembrane domains (TMD) form a pore in the inner membrane and the ATP-binding domain (NBD) is responsible for energy generation. This is ATP-dependent lipid A-core flippase from Francisella tularensis subsp. tularensis (strain FSC 198).